Here is a 105-residue protein sequence, read N- to C-terminus: Large ribosomal subunit protein uL24 (105 aa).

Belongs to the universal ribosomal protein uL24 family. In terms of assembly, part of the 50S ribosomal subunit.

Its function is as follows. One of two assembly initiator proteins, it binds directly to the 5'-end of the 23S rRNA, where it nucleates assembly of the 50S subunit. One of the proteins that surrounds the polypeptide exit tunnel on the outside of the subunit. The polypeptide is Large ribosomal subunit protein uL24 (Novosphingobium aromaticivorans (strain ATCC 700278 / DSM 12444 / CCUG 56034 / CIP 105152 / NBRC 16084 / F199)).